Consider the following 852-residue polypeptide: Patatin-like phospholipase domain-containing protein CaO19.1504 (852 aa).

Residues 41–52 (ATTDITTTPIND) show a composition bias toward low complexity. Residues 41–184 (ATTDITTTPI…KKTTPTSSTS (144 aa)) form a disordered region. A compositionally biased stretch (polar residues) spans 75–95 (INGTVSDSSSITDEDIMNSSY). Over residues 101-110 (SSTNLKSNST) the composition is skewed to low complexity. Residues 113–122 (DDDDDDDDDD) are compositionally biased toward acidic residues. Composition is skewed to low complexity over residues 129-142 (SGTT…SLSS) and 158-171 (GGSR…KGSS). Residues 207–227 (WPILIFVFSWIGILGIFYFMI) traverse the membrane as a helical segment. The 193-residue stretch at 396–588 (LCLSGGACFA…RTDIPIEALN (193 aa)) folds into the PNPLA domain. The GXSXG signature appears at 427–431 (GTSGG). Catalysis depends on Ser-429, which acts as the Nucleophile. Asp-575 serves as the catalytic Proton acceptor. Positions 800 to 840 (KKLLDELDNEDEEEDEEEEEVDVDDDDDDDDDSLSDSFEIT) are disordered. Over residues 805–833 (ELDNEDEEEDEEEEEVDVDDDDDDDDDSL) the composition is skewed to acidic residues.

The protein belongs to the PLPL family.

It localises to the membrane. Probable lipid hydrolase. This Candida albicans (strain SC5314 / ATCC MYA-2876) (Yeast) protein is Patatin-like phospholipase domain-containing protein CaO19.1504.